The following is a 305-amino-acid chain: Ribonuclease H (305 aa).

The catalysed reaction is Endonucleolytic cleavage to 5'-phosphomonoester.. Its function is as follows. Plays essential roles in DNA replication by removing the RNA primers from lagging strand fragments. Exhibits 5'to 3' exonuclease activity on either RNA/DNA or DNA/DNA duplexes and endonuclease activity on either flap or fork DNA structures. The chain is Ribonuclease H (rnh) from Enterobacteria phage T4 (Bacteriophage T4).